A 260-amino-acid chain; its full sequence is Global transcriptional regulator CodY (260 aa).

Positions 1–159 (MPNLLEKTRK…SSTVVGIQLL (159 aa)) are GAF domain. The segment at residues 207 to 226 (ASVIADRIGITRSVIVNALR) is a DNA-binding region (H-T-H motif).

Belongs to the CodY family.

The protein resides in the cytoplasm. In terms of biological role, DNA-binding global transcriptional regulator which is involved in the adaptive response to starvation and acts by directly or indirectly controlling the expression of numerous genes in response to nutrient availability. During rapid exponential growth, CodY is highly active and represses genes whose products allow adaptation to nutrient depletion. This is Global transcriptional regulator CodY from Streptococcus pyogenes serotype M1.